The following is a 226-amino-acid chain: Ribonuclease 3 (226 aa).

Positions 5-127 (LERLQRALGY…IIGAIYLDAG (123 aa)) constitute an RNase III domain. Glutamate 40 contributes to the Mg(2+) binding site. Aspartate 44 is an active-site residue. Mg(2+)-binding residues include aspartate 113 and glutamate 116. Glutamate 116 is an active-site residue. A DRBM domain is found at 154-224 (DSKTRLQEYL…AKQALLALGV (71 aa)).

It belongs to the ribonuclease III family. As to quaternary structure, homodimer. Requires Mg(2+) as cofactor.

The protein localises to the cytoplasm. The catalysed reaction is Endonucleolytic cleavage to 5'-phosphomonoester.. Digests double-stranded RNA. Involved in the processing of primary rRNA transcript to yield the immediate precursors to the large and small rRNAs (23S and 16S). Processes some mRNAs, and tRNAs when they are encoded in the rRNA operon. Processes pre-crRNA and tracrRNA of type II CRISPR loci if present in the organism. The sequence is that of Ribonuclease 3 from Hahella chejuensis (strain KCTC 2396).